The following is a 196-amino-acid chain: ATP-dependent Clp protease proteolytic subunit (196 aa).

Serine 101 acts as the Nucleophile in catalysis. Histidine 126 is an active-site residue.

Belongs to the peptidase S14 family. As to quaternary structure, component of the chloroplastic Clp protease core complex.

The protein localises to the plastid. It is found in the chloroplast stroma. The enzyme catalyses Hydrolysis of proteins to small peptides in the presence of ATP and magnesium. alpha-casein is the usual test substrate. In the absence of ATP, only oligopeptides shorter than five residues are hydrolyzed (such as succinyl-Leu-Tyr-|-NHMec, and Leu-Tyr-Leu-|-Tyr-Trp, in which cleavage of the -Tyr-|-Leu- and -Tyr-|-Trp bonds also occurs).. Its function is as follows. Cleaves peptides in various proteins in a process that requires ATP hydrolysis. Has a chymotrypsin-like activity. Plays a major role in the degradation of misfolded proteins. This Barbarea verna (Land cress) protein is ATP-dependent Clp protease proteolytic subunit.